A 341-amino-acid polypeptide reads, in one-letter code: tRNA N6-adenosine threonylcarbamoyltransferase (341 aa).

Residues H111 and H115 each coordinate Fe cation. Residues 134 to 138 (LVSGG), D167, G180, and N276 contribute to the substrate site. A Fe cation-binding site is contributed by D304.

Belongs to the KAE1 / TsaD family. Requires Fe(2+) as cofactor.

It localises to the cytoplasm. The enzyme catalyses L-threonylcarbamoyladenylate + adenosine(37) in tRNA = N(6)-L-threonylcarbamoyladenosine(37) in tRNA + AMP + H(+). Required for the formation of a threonylcarbamoyl group on adenosine at position 37 (t(6)A37) in tRNAs that read codons beginning with adenine. Is involved in the transfer of the threonylcarbamoyl moiety of threonylcarbamoyl-AMP (TC-AMP) to the N6 group of A37, together with TsaE and TsaB. TsaD likely plays a direct catalytic role in this reaction. This chain is tRNA N6-adenosine threonylcarbamoyltransferase, found in Pseudomonas putida (strain ATCC 47054 / DSM 6125 / CFBP 8728 / NCIMB 11950 / KT2440).